A 240-amino-acid chain; its full sequence is Probable transcriptional regulatory protein Nmul_A2722 (240 aa).

This sequence belongs to the TACO1 family.

It localises to the cytoplasm. This is Probable transcriptional regulatory protein Nmul_A2722 from Nitrosospira multiformis (strain ATCC 25196 / NCIMB 11849 / C 71).